The following is a 585-amino-acid chain: Amyloid protein-binding protein 2 (585 aa).

TPR repeat units follow at residues 50–83 (QGRLCQLGSEFCELEVFAKVLRALDKRHLLHHCF), 120–153 (IQVGFVLGGFLSDAGWYSDAEKVFLSCLQLCTLH), 206–239 (AALYGELCALLFAKSHYDEAYKWCVEAMKEITAG), 288–321 (SDTLLDYGFYLLNVDNICQSVAIYQAALDIRQSV), 333–367 (HEDLAYSSYVHQYSSGKFDNALFHAERAIGIITHI), 429–462 (AKHYGNLGRLYQSMRKFKEAEEMHIKAIQIKEQL), 471–505 (ALSVGHLASLYNYDMNQYENAEKLYLRSIAIGKKL), and 514–547 (EYDYRGLIKLYNSIGNYEKVFEYHNVLSNWNRLR).

Component of a CRL2 E3 ubiquitin-protein ligase complex, also named ECS (Elongin BC-CUL2/5-SOCS-box protein) complex, composed of CUL2, Elongin BC (ELOB and ELOC), RBX1 and substrate-specific adapter APPBP2. Interacts with APP; APP interaction inhibits the E3 ubiquitin-protein ligase activity of the CRL2(APPBP2) complex. In terms of processing, rapidly degraded by the proteasome upon overexpression of a C-terminal fragment of APP.

Its subcellular location is the nucleus. The protein localises to the cytoplasm. It is found in the cytoskeleton. The protein resides in the membrane. It participates in protein modification; protein ubiquitination. With respect to regulation, E3 ubiquitin-protein ligase activity of the CRL2(APPBP2) complex is inhibited by APP. In terms of biological role, substrate-recognition component of a Cul2-RING (CRL2) E3 ubiquitin-protein ligase complex of the DesCEND (destruction via C-end degrons) pathway, which recognizes a C-degron located at the extreme C terminus of target proteins, leading to their ubiquitination and degradation. The C-degron recognized by the DesCEND pathway is usually a motif of less than ten residues and can be present in full-length proteins, truncated proteins or proteolytically cleaved forms. The CRL2(APPBP2) complex specifically recognizes proteins with a -Arg-Xaa-Xaa-Gly degron at the C-terminus, leading to their ubiquitination and degradation. The CRL2(APPBP2) complex mediates ubiquitination and degradation of truncated SELENOV selenoproteins produced by failed UGA/Sec decoding, which end with a -Arg-Xaa-Xaa-Gly degron. May play a role in intracellular protein transport: may be involved in the translocation of APP along microtubules toward the cell surface. This is Amyloid protein-binding protein 2 from Mus musculus (Mouse).